Reading from the N-terminus, the 500-residue chain is AAA-ATPase At3g28580 (500 aa).

A helical transmembrane segment spans residues 7-29; it reads LWTNTGSALATLMFVYTIFKQFF. The segment at 174 to 193 is disordered; sequence NRERKLYSNTPGQSHGNNSK. Positions 180–193 are enriched in polar residues; that stretch reads YSNTPGQSHGNNSK. Residue 247–254 participates in ATP binding; it reads GPPGTGKS. Residues 462 to 500 form a disordered region; it reads KEEAKKKVEEEEEEKQRKKEKVKEIEAEKEKKKKIEEEN.

This sequence belongs to the AAA ATPase family. BCS1 subfamily. It depends on Mg(2+) as a cofactor.

It is found in the membrane. It catalyses the reaction ATP + H2O = ADP + phosphate + H(+). The chain is AAA-ATPase At3g28580 from Arabidopsis thaliana (Mouse-ear cress).